The sequence spans 171 residues: T-cell surface glycoprotein CD3 delta chain (171 aa).

The first 21 residues, M1–P21, serve as a signal peptide directing secretion. Residues F22–A105 lie on the Extracellular side of the membrane. A disulfide bridge links C37 with C73. Residues N38 and N74 are each glycosylated (N-linked (GlcNAc...) asparagine). A helical transmembrane segment spans residues G106–A126. At G127–K171 the chain is on the cytoplasmic side. An ITAM domain is found at D138–N166. 2 positions are modified to phosphotyrosine: Y149 and Y160.

In terms of assembly, the TCR-CD3 complex is composed of a CD3D/CD3E and a CD3G/CD3E heterodimers that preferentially associate with TCRalpha and TCRbeta, respectively, to form TCRalpha/CD3E/CD3G and TCRbeta/CD3G/CD3E trimers. In turn, the hexamer interacts with CD3Z homodimer to form the TCR-CD3 complex. Alternatively, TCRalpha and TCRbeta can be replaced by TCRgamma and TCRdelta. Interacts with coreceptors CD4 and CD8. In terms of processing, phosphorylated on Tyr residues after T-cell receptor triggering by LCK in association with CD4/CD8. As to expression, CD3D is mostly present on T-lymphocytes with its TCR-CD3 partners. Present also in fetal NK-cells.

It localises to the cell membrane. Functionally, part of the TCR-CD3 complex present on T-lymphocyte cell surface that plays an essential role in adaptive immune response. When antigen presenting cells (APCs) activate T-cell receptor (TCR), TCR-mediated signals are transmitted across the cell membrane by the CD3 chains CD3D, CD3E, CD3G and CD3Z. All CD3 chains contain immunoreceptor tyrosine-based activation motifs (ITAMs) in their cytoplasmic domain. Upon TCR engagement, these motifs become phosphorylated by Src family protein tyrosine kinases LCK and FYN, resulting in the activation of downstream signaling pathways. In addition of this role of signal transduction in T-cell activation, CD3D plays an essential role in thymocyte differentiation. Indeed, participates in correct intracellular TCR-CD3 complex assembly and surface expression. In absence of a functional TCR-CD3 complex, thymocytes are unable to differentiate properly. Interacts with CD4 and CD8 and thus serves to establish a functional link between the TCR and coreceptors CD4 and CD8, which is needed for activation and positive selection of CD4 or CD8 T-cells. This chain is T-cell surface glycoprotein CD3 delta chain (CD3D), found in Homo sapiens (Human).